Consider the following 121-residue polypeptide: Large ribosomal subunit protein bL12 (121 aa).

Belongs to the bacterial ribosomal protein bL12 family. Homodimer. Part of the ribosomal stalk of the 50S ribosomal subunit. Forms a multimeric L10(L12)X complex, where L10 forms an elongated spine to which 2 to 4 L12 dimers bind in a sequential fashion. Binds GTP-bound translation factors.

In terms of biological role, forms part of the ribosomal stalk which helps the ribosome interact with GTP-bound translation factors. Is thus essential for accurate translation. This is Large ribosomal subunit protein bL12 from Baumannia cicadellinicola subsp. Homalodisca coagulata.